Reading from the N-terminus, the 105-residue chain is Small ribosomal subunit protein uS10 (105 aa).

Belongs to the universal ribosomal protein uS10 family. In terms of assembly, part of the 30S ribosomal subunit.

Involved in the binding of tRNA to the ribosomes. In Rickettsia canadensis (strain McKiel), this protein is Small ribosomal subunit protein uS10.